Here is a 314-residue protein sequence, read N- to C-terminus: Homoserine O-acetyltransferase (314 aa).

The active-site Acyl-thioester intermediate is C142. 2 residues coordinate substrate: K163 and S192. Catalysis depends on H235, which acts as the Proton acceptor. E237 is an active-site residue. R249 is a binding site for substrate.

It belongs to the MetA family.

It is found in the cytoplasm. The catalysed reaction is L-homoserine + acetyl-CoA = O-acetyl-L-homoserine + CoA. It functions in the pathway amino-acid biosynthesis; L-methionine biosynthesis via de novo pathway; O-acetyl-L-homoserine from L-homoserine: step 1/1. Functionally, transfers an acetyl group from acetyl-CoA to L-homoserine, forming acetyl-L-homoserine. This is Homoserine O-acetyltransferase from Streptococcus pneumoniae serotype 4 (strain ATCC BAA-334 / TIGR4).